The following is a 215-amino-acid chain: Probable glutathione S-transferase GSTF2 (215 aa).

The GST N-terminal domain maps to 2–83; the sequence is APMKLYGSTL…YVCRKNKPEL (82 aa). Glutathione is bound by residues serine 12, 41–42, 54–55, and 67–68; these read HK, QV, and ES. The GST C-terminal domain occupies 88-215; that stretch reads DLKESAMVDV…KVASLMKPPA (128 aa).

This sequence belongs to the GST superfamily. Phi family. Constitutively expressed in roots. Expressed in anthers, callus, panicles, sheaths and stems (at protein level).

The enzyme catalyses RX + glutathione = an S-substituted glutathione + a halide anion + H(+). Conjugation of reduced glutathione to a wide number of exogenous and endogenous hydrophobic electrophiles. This is Probable glutathione S-transferase GSTF2 (GSTF2) from Oryza sativa subsp. japonica (Rice).